A 440-amino-acid polypeptide reads, in one-letter code: Mitochondrial translation factor 2 (440 aa).

A mitochondrion-targeting transit peptide spans methionine 1–tyrosine 15.

Its subcellular location is the mitochondrion matrix. Its function is as follows. Required for the processing and/or for the stability of the CYTB and COX1 intron-containing pre-mRNAs and of the ATP6 transcript. Could be a stem-loop RNA-binding protein that plays a role in determining RNA stability. The chain is Mitochondrial translation factor 2 (MTF2) from Saccharomyces cerevisiae (strain ATCC 204508 / S288c) (Baker's yeast).